Reading from the N-terminus, the 638-residue chain is 1-deoxy-D-xylulose-5-phosphate synthase (638 aa).

Thiamine diphosphate-binding positions include histidine 74 and 115–117; that span reads GHS. Aspartate 146 contributes to the Mg(2+) binding site. Thiamine diphosphate is bound by residues 147 to 148, asparagine 175, tyrosine 286, and glutamate 366; that span reads GA. Asparagine 175 provides a ligand contact to Mg(2+).

This sequence belongs to the transketolase family. DXPS subfamily. Homodimer. It depends on Mg(2+) as a cofactor. Thiamine diphosphate serves as cofactor.

The enzyme catalyses D-glyceraldehyde 3-phosphate + pyruvate + H(+) = 1-deoxy-D-xylulose 5-phosphate + CO2. It functions in the pathway metabolic intermediate biosynthesis; 1-deoxy-D-xylulose 5-phosphate biosynthesis; 1-deoxy-D-xylulose 5-phosphate from D-glyceraldehyde 3-phosphate and pyruvate: step 1/1. In terms of biological role, catalyzes the acyloin condensation reaction between C atoms 2 and 3 of pyruvate and glyceraldehyde 3-phosphate to yield 1-deoxy-D-xylulose-5-phosphate (DXP). This chain is 1-deoxy-D-xylulose-5-phosphate synthase, found in Syntrophomonas wolfei subsp. wolfei (strain DSM 2245B / Goettingen).